The primary structure comprises 747 residues: Zinc finger and BTB domain-containing protein 47 (747 aa).

One can recognise a BTB domain in the interval 15–83 (CDVDLVLVPQ…IYTSKLLVNA (69 aa)). K190 participates in a covalent cross-link: Glycyl lysine isopeptide (Lys-Gly) (interchain with G-Cter in SUMO2). The tract at residues 243–424 (QTLHVSTGPE…ARGPPATDGL (182 aa)) is disordered. Residues 267 to 277 (GREDGLQRHSD) show a composition bias toward basic and acidic residues. Residues 278-354 (EEEEDDEEEE…SEEEEGEEGE (77 aa)) show a composition bias toward acidic residues. The span at 380 to 398 (RSRENARRRGTPEPEEAGR) shows a compositional bias: basic and acidic residues. Residues 436-459 (HPCQKCPRVFNNRWYLEKHMNVTH) form a C2H2-type 1 zinc finger. The C2H2-type 2; degenerate zinc finger occupies 463–485 (QICDQCGKRFLLESELLLHRQTD). 7 C2H2-type zinc fingers span residues 490–513 (IQCVTCGKAFKKLWSLHEHNKIVH), 520–542 (FSCEICEKKFYTMAHVRKHMVAH), 548–570 (FTCETCGKSFKRSMSLKVHSLQH), 576–598 (FRCENCNERFQYKYQLRSHMSIH), 604–626 (FMCQWCGKDFNMKQYFDEHMKTH), 632–654 (YICEICGKSFTSRPNMKRHRRTH), and 660–687 (YPCDVCGQRFRFSNMLKAHKEKCFRVSH). The interval 694–747 (VPAAPGLPPTQPQAHALPLLPGLPQTLPPPPHLPPPPPLFPTTASPGGRMNANN) is disordered. The span at 719–733 (TLPPPPHLPPPPPLF) shows a compositional bias: pro residues.

This sequence belongs to the krueppel C2H2-type zinc-finger protein family.

Its subcellular location is the nucleus. May be involved in transcriptional regulation. The chain is Zinc finger and BTB domain-containing protein 47 (ZBTB47) from Homo sapiens (Human).